Reading from the N-terminus, the 414-residue chain is 3-oxoacyl-[acyl-carrier-protein] synthase 2 (414 aa).

Positions 3–413 constitute a Ketosynthase family 3 (KS3) domain; sequence KRRVVVTGMG…GTNGSLIFKR (411 aa). Residues cysteine 164, histidine 304, and histidine 342 each act as for beta-ketoacyl synthase activity in the active site.

It belongs to the thiolase-like superfamily. Beta-ketoacyl-ACP synthases family. As to quaternary structure, homodimer.

The catalysed reaction is a fatty acyl-[ACP] + malonyl-[ACP] + H(+) = a 3-oxoacyl-[ACP] + holo-[ACP] + CO2. The enzyme catalyses (9Z)-hexadecenoyl-[ACP] + malonyl-[ACP] + H(+) = 3-oxo-(11Z)-octadecenoyl-[ACP] + holo-[ACP] + CO2. It participates in lipid metabolism; fatty acid biosynthesis. Involved in the type II fatty acid elongation cycle. Catalyzes the elongation of a wide range of acyl-ACP by the addition of two carbons from malonyl-ACP to an acyl acceptor. Can efficiently catalyze the conversion of palmitoleoyl-ACP (cis-hexadec-9-enoyl-ACP) to cis-vaccenoyl-ACP (cis-octadec-11-enoyl-ACP), an essential step in the thermal regulation of fatty acid composition. The protein is 3-oxoacyl-[acyl-carrier-protein] synthase 2 (fabF) of Vibrio cholerae serotype O1 (strain ATCC 39315 / El Tor Inaba N16961).